The chain runs to 151 residues: MGRMHAPGKGISQSALPYRRSVPTWLKLGPDDVKEQIYKLAKKGLTPSQIGVILRDSHGVAQTRHVAGNKILRILKAKGLAPTIPEDLYFLIKKAVAIRKHLERNRKDKDSKFRLILVESRIHRLARYYKTRKVLPPVWKYESATASALVA.

The protein belongs to the universal ribosomal protein uS15 family.

In Lumbricus rubellus (Humus earthworm), this protein is Small ribosomal subunit protein uS15 (RPS13).